The sequence spans 464 residues: Protein VAPYRIN-LIKE (464 aa).

The 122-residue stretch at 3–124 (RLVKTEFNEV…RDAVITVILV (122 aa)) folds into the MSP domain. ANK repeat units lie at residues 153–182 (NLTN…DVNF), 186–215 (NGKS…RIND), 217–246 (VDFV…ELDV), 252–281 (EMMT…NANA), 285–314 (RRWT…VKYA), 318–347 (NGKT…LLQA), 349–368 (RVDD…EVNR), 372–401 (NGWT…EVDS), and 405–435 (AGYT…QTNL).

In terms of tissue distribution, expressed in roots.

It is found in the cytoplasm. The protein resides in the nucleus. The protein localises to the cell membrane. May be involved in arbuscular mycorrhizal (AM) symbiosis with AM fungi and in nitrogen-fixing rhizobial bacteria symbiosis leading to the formation of root nodules. In Medicago truncatula (Barrel medic), this protein is Protein VAPYRIN-LIKE.